The chain runs to 347 residues: GTP 3',8-cyclase (347 aa).

The Radical SAM core domain maps to 12–242 (FRPFGVLRLS…QRIDARWPLR (231 aa)). R19 contacts GTP. Residues C26 and C30 each coordinate [4Fe-4S] cluster. Y32 is an S-adenosyl-L-methionine binding site. C33 is a binding site for [4Fe-4S] cluster. A GTP-binding site is contributed by R65. G69 contributes to the S-adenosyl-L-methionine binding site. Position 104 (T104) interacts with GTP. S129 serves as a coordination point for S-adenosyl-L-methionine. GTP is bound at residue K178. M212 serves as a coordination point for S-adenosyl-L-methionine. The [4Fe-4S] cluster site is built by C275 and C278. 280–282 (RLR) provides a ligand contact to GTP. C292 is a [4Fe-4S] cluster binding site.

Belongs to the radical SAM superfamily. MoaA family. In terms of assembly, monomer and homodimer. [4Fe-4S] cluster is required as a cofactor.

It catalyses the reaction GTP + AH2 + S-adenosyl-L-methionine = (8S)-3',8-cyclo-7,8-dihydroguanosine 5'-triphosphate + 5'-deoxyadenosine + L-methionine + A + H(+). It functions in the pathway cofactor biosynthesis; molybdopterin biosynthesis. In terms of biological role, catalyzes the cyclization of GTP to (8S)-3',8-cyclo-7,8-dihydroguanosine 5'-triphosphate. In Synechococcus sp. (strain WH7803), this protein is GTP 3',8-cyclase.